The sequence spans 287 residues: Transcription initiation factor IIB 1 (287 aa).

A TFIIB-type zinc finger spans residues 3–31 (HPHRCPECDGTIRETDTEHVCADCGLVVT). Residues Cys7, Cys10, Cys23, and Cys26 each coordinate Zn(2+). Over residues 40 to 53 (EWRTFSDDPDHAPE) the composition is skewed to basic and acidic residues. The disordered stretch occupies residues 40-63 (EWRTFSDDPDHAPERTGAPLTRSR). A run of 2 repeats spans residues 111 to 194 (TEIR…NRDL) and 205 to 286 (EYLP…NLTD).

This sequence belongs to the TFIIB family.

Functionally, stabilizes TBP binding to an archaeal box-A promoter. Also responsible for recruiting RNA polymerase II to the pre-initiation complex (DNA-TBP-TFIIB). In Halobacterium salinarum (strain ATCC 700922 / JCM 11081 / NRC-1) (Halobacterium halobium), this protein is Transcription initiation factor IIB 1.